A 458-amino-acid chain; its full sequence is Hepatocyte nuclear factor 3-beta (458 aa).

The segment at 14-93 is transactivation domain 1; sequence DWSSYYAEPE…AGAMAGMSGS (80 aa). The Nuclear localization signal motif lies at 106 to 113; it reads LSPSLSPL. A Phosphothreonine; by PKB/AKT1 modification is found at Thr156. Positions 159-252 form a DNA-binding region, fork-head; it reads KPPYSYISLI…ENGCYLRRQK (94 aa). Phosphoserine is present on residues Ser212 and Ser283. The disordered stretch occupies residues 286–365; the sequence is QLGEAAGSAS…PGLPPEAHLK (80 aa). Residues 294–310 show a composition bias toward polar residues; that stretch reads ASETPAGTESPHSSASP. At Thr301 the chain carries Phosphothreonine. A phosphoserine mark is found at Ser303, Ser306, Ser307, and Ser309. The segment covering 339 to 352 has biased composition (low complexity); sequence PGQQQQAAAHLLGP. The interval 361–458 is transactivation domain 2; that stretch reads EAHLKPEHHY…VYSRPIMNSS (98 aa). 2 positions are modified to phosphoserine: Ser437 and Ser458.

As to quaternary structure, binds DNA as a monomer. Binds TLE1. Interacts with FOXA1 and FOXA3. Interacts with PRKDC. Interacts with AKT1. Interacts with TET1; this interaction may recruit TET1 to specific genomic loci to mediate their demethylation. In terms of processing, phosphorylation on Thr-156 abolishes binding to target promoters and subsequent transcription activation upon insulin stimulation. As to expression, liver.

Its subcellular location is the nucleus. It localises to the cytoplasm. Its function is as follows. Transcription factor that is involved in embryonic development, establishment of tissue-specific gene expression and regulation of gene expression in differentiated tissues. Is thought to act as a 'pioneer' factor opening the compacted chromatin for other proteins through interactions with nucleosomal core histones and thereby replacing linker histones at target enhancer and/or promoter sites. Binds DNA with the consensus sequence 5'-[AC]A[AT]T[AG]TT[GT][AG][CT]T[CT]-3'. In embryonic development is required for notochord formation. Involved in the development of multiple endoderm-derived organ systems such as the liver, pancreas and lungs; FOXA1 and FOXA2 seem to have at least in part redundant roles. Originally described as a transcription activator for a number of liver genes such as AFP, albumin, tyrosine aminotransferase, PEPCK, etc. Interacts with the cis-acting regulatory regions of these genes. Involved in glucose homeostasis; regulates the expression of genes important for glucose sensing in pancreatic beta-cells and glucose homeostasis. Involved in regulation of fat metabolism. Acts synergistically with ONECUT1 to activate transcription of female-specific CYP2C12; the function is inhibited by growth hormone-activated STAT5B. Acts synergistically with HNF4A to activate transcription of APOA1. The sequence is that of Hepatocyte nuclear factor 3-beta (Foxa2) from Rattus norvegicus (Rat).